Consider the following 268-residue polypeptide: Movement protein (268 aa).

Positions 218-246 are disordered; it reads SDVRKGKISSSDRSAPNKNYRNVKDFGGM. Residues 225–237 show a composition bias toward polar residues; it reads ISSSDRSAPNKNY.

The protein belongs to the tobamovirus movement protein family. In terms of assembly, binds to host RBCS at the plasmodesmata; this interaction seems required for viral systemic movement. In resistant plants, interacts with host MBP2C at host microtubules; this interaction prevents virus cell to cell movement. In resistant plants, interacts with host resistance (R) protein (e.g. tomato ToMV resistance protein TM-2(2), AC Q71BG9) at the host plasma membrane; this interaction triggers host defense responses leading to programmed cell death.

It is found in the host cytoplasm. Its subcellular location is the host cytoskeleton. It localises to the host cell junction. The protein localises to the host plasmodesma. Functionally, transports viral genome to neighboring plant cells directly through plasmosdesmata, without any budding. The movement protein allows efficient cell to cell propagation, by bypassing the host cell wall barrier. Forms a ribonucleoprotein complex with viral RNA. Binds microtubules and modulates microtubule stability. Can bind double-stranded DNA. Triggers host hypersensitive defense reaction in incompatible plants harboring resistance (R) proteins. The protein is Movement protein (MP) of Nicotiana tabacum (Common tobacco).